An 804-amino-acid polypeptide reads, in one-letter code: SH3-containing GRB2-like protein 3-interacting protein 1 (804 aa).

3 disordered regions span residues 1 to 90, 124 to 181, and 199 to 254; these read MMEG…EESH, LSPS…GPPL, and IWGS…QSAT. A compositionally biased stretch (basic and acidic residues) spans 16–34; that stretch reads RKKEKDTDSTGSPDRDGIK. Phosphoserine is present on residues Ser54, Ser80, Ser81, Ser83, Ser125, Ser127, Ser132, and Ser145. 2 positions are modified to phosphothreonine: Thr156 and Thr158. Position 212 is a phosphoserine (Ser212). Pro residues predominate over residues 221 to 236; it reads TGTPPPLPPKNVPATP. Phosphothreonine occurs at positions 223 and 235. Phosphoserine occurs at positions 241, 263, 276, 292, and 295. Positions 289–309 are enriched in basic and acidic residues; the sequence is VHFSDTSPEHVTPELTPREKV. Positions 289 to 500 are disordered; the sequence is VHFSDTSPEH…LSAATTPTVE (212 aa). Phosphothreonine is present on residues Thr300 and Thr304. Positions 322-346 are enriched in pro residues; the sequence is SPAPGPLGPPGPTGPPGPPGPPRNV. A Phosphoserine modification is found at Ser348. Over residues 354 to 369 the composition is skewed to basic and acidic residues; the sequence is EVQKKVAEQTFIKDDY. Ser375 carries the post-translational modification Phosphoserine. A Phosphothreonine modification is found at Thr386. The segment covering 413-432 has biased composition (low complexity); that stretch reads TSGASSPARPATPLLPCSST. Residues 433–451 are compositionally biased toward pro residues; it reads TPPPPPPRPPSRPKLPPGK. 2 stretches are compositionally biased toward low complexity: residues 458–468 and 475–498; these read SRPFSPPIHSS and PLAR…TTPT. The residue at position 462 (Ser462) is a Phosphoserine. In terms of domain architecture, MHD spans 535-803; it reads TLPVAAAFTE…RFAAGKYLAD (269 aa). 4 interaction with DPF motifs-containing proteins regions span residues 537–543, 569–571, 643–646, and 789–794; these read PVAAAFT, SFP, TYYN, and SLIKKR. Residues 625–804 are necessary and sufficient to mediate interaction with CANX; the sequence is MPNLMTHLKK…FAAGKYLADN (180 aa).

As to quaternary structure, interacts with proteins essential or regulating the formation of functional clathrin-coated pits. Interacts with CANX. Interacts with AP2A1. Interacts with EPS15. Interacts with SH3GL3. Interacts with AMPH. Interacts with ITSN1 (via SH3 domains). Interacts with and REPS1.

The protein resides in the membrane. Its subcellular location is the clathrin-coated pit. Functionally, may function in clathrin-mediated endocytosis. Has both a membrane binding/tubulating activity and the ability to recruit proteins essential to the formation of functional clathrin-coated pits. Has a preference for membranes enriched in phosphatidylserine and phosphoinositides and is required for the endocytosis of the transferrin receptor. May also bind tubulin. May play a role in the regulation of energy homeostasis. In Pongo abelii (Sumatran orangutan), this protein is SH3-containing GRB2-like protein 3-interacting protein 1 (SGIP1).